The following is a 305-amino-acid chain: HTH-type transcriptional regulator KdgR (305 aa).

In terms of domain architecture, HTH iclR-type spans 55–116 (VSSVLKVFGI…GESEKYSLTL (62 aa)). The H-T-H motif DNA-binding region spans 76 to 95 (ITELSQRVMMSKSTVYRFLQ). One can recognise an IclR-ED domain in the interval 131–300 (LIRSADIQMR…ARNISDQMGY (170 aa)).

In terms of assembly, homodimer.

It is found in the cytoplasm. In terms of biological role, transcriptional repressor that negatively regulates the expression of genes involved in pectinolysis and in pectinase secretion. Controls genes involved in pectin catabolism, including the pectinase genes (pelA, pelB, pelC, pelE), genes involved in pectin catabolism (kdgT, ogl, kduI-kdgF) and the outT gene involved in pectinase secretion. Acts by binding directly to KdgR binding sites (KdgR-box) in the gene operator/promoter region. In Dickeya chrysanthemi (Pectobacterium chrysanthemi), this protein is HTH-type transcriptional regulator KdgR.